A 324-amino-acid polypeptide reads, in one-letter code: Interleukin-12 subunit beta (324 aa).

The first 22 residues, 1–22 (MHLQQLVVSWFSLVWLASPIVA), serve as a signal peptide directing secretion. Residues 23–106 (IWELEKNVYV…LSQSLLLLHK (84 aa)) enclose the Ig-like C2-type domain. C50 and C90 are oxidised to a cystine. N-linked (GlcNAc...) asparagine glycosylation is found at N125, N135, and N218. The region spanning 233 to 324 (PPKNLQLNPL…WSEWASVSCN (92 aa)) is the Fibronectin type-III domain.

It belongs to the IL-12B family. In terms of assembly, heterodimer with IL12A; disulfide-linked. The heterodimer is known as interleukin IL-12. Heterodimer with IL23A; disulfide-linked. The heterodimer is known as interleukin IL-23. Also secreted as a monomer. Interacts with NBR1; this interaction promotes IL-12 secretion.

The protein localises to the secreted. Functionally, cytokine that can act as a growth factor for activated T and NK cells, enhance the lytic activity of NK/lymphokine-activated killer cells, and stimulate the production of IFN-gamma by resting PBMC. Its function is as follows. Associates with IL23A to form the IL-23 interleukin, a heterodimeric cytokine which functions in innate and adaptive immunity. IL-23 may constitute with IL-17 an acute response to infection in peripheral tissues. IL-23 binds to a heterodimeric receptor complex composed of IL12RB1 and IL23R, activates the Jak-Stat signaling cascade, stimulates memory rather than naive T-cells and promotes production of pro-inflammatory cytokines. IL-23 induces autoimmune inflammation and thus may be responsible for autoimmune inflammatory diseases and may be important for tumorigenesis. The polypeptide is Interleukin-12 subunit beta (IL12B) (Sus scrofa (Pig)).